The chain runs to 372 residues: MNLSEIGYRRVVVKLGTSVLTSGSKQLDKAHMVELARQMSALMKAGVEVVLCTSGAIAAGREHLGYPKLADTVANKQLLAAVGQSQLILAWSQLFSIYGLHVGQLLLTQADLHDRERYLNARDSLNALLNNGIIPIINENDAVATNEIKVGDNDNLSARAALLCHADLLILLTDQQGLFDSDPRSNPDAKLIKQVVNIDDSLRQLAGGAVSGLGTGGMATKLEAADIARRAGIEVVIASGHRRQVILNAVCKEDVGTHFTALENPLESRKQWILAGQAAKGKLVLDVGAIKAVTEKGRSLLSKGVVSVIGEFDRGTTLQLIDSDGRECARGISRYSAGDLNKIVGKHSDEIESLLGYDYGDAVVHRNDMVVL.

Residue K14 participates in ATP binding. Positions 54, 141, and 153 each coordinate substrate. ATP-binding positions include 173–174 and 215–221; these read TD and TGGMATK. A PUA domain is found at 280–358; sequence KGKLVLDVGA…DEIESLLGYD (79 aa).

This sequence belongs to the glutamate 5-kinase family.

The protein resides in the cytoplasm. The enzyme catalyses L-glutamate + ATP = L-glutamyl 5-phosphate + ADP. Its pathway is amino-acid biosynthesis; L-proline biosynthesis; L-glutamate 5-semialdehyde from L-glutamate: step 1/2. Its function is as follows. Catalyzes the transfer of a phosphate group to glutamate to form L-glutamate 5-phosphate. The protein is Glutamate 5-kinase of Shewanella woodyi (strain ATCC 51908 / MS32).